The primary structure comprises 727 residues: Calpain-like protease 1 (727 aa).

One can recognise a Calpain catalytic domain in the interval 70 to 317 (SRFYPPIPIS…FKQLYLNWNQ (248 aa)). Catalysis depends on residues C128, H271, and N296.

The protein belongs to the peptidase C2 family. PalB/RIM13 subfamily. Interacts with SNF7, which may act together with RIM20 as a scaffold to recruit RIM13 to its substrate RIM101.

Functionally, required for the proteolytic cleavage of the transcriptional repressor RIM101 in response to alkaline ambient pH, which is necessary for sporulation and invasive growth. Probably the protease that cleaves RIM101. The protein is Calpain-like protease 1 (RIM13) of Saccharomyces cerevisiae (strain ATCC 204508 / S288c) (Baker's yeast).